The primary structure comprises 584 residues: tRNA-guanine(15) transglycosylase (584 aa).

D95 (nucleophile) is an active-site residue. Substrate contacts are provided by D130 and G196. Residues C279, C281, and C284 each contribute to the Zn(2+) site. Positions 507–582 (RMRVVVSEEA…RAVKVRRGIS (76 aa)) constitute a PUA domain.

Belongs to the archaeosine tRNA-ribosyltransferase family. It depends on Zn(2+) as a cofactor.

It carries out the reaction guanosine(15) in tRNA + 7-cyano-7-deazaguanine = 7-cyano-7-carbaguanosine(15) in tRNA + guanine. The protein operates within tRNA modification; archaeosine-tRNA biosynthesis. Exchanges the guanine residue with 7-cyano-7-deazaguanine (preQ0) at position 15 in the dihydrouridine loop (D-loop) of archaeal tRNAs. The chain is tRNA-guanine(15) transglycosylase from Pyrococcus abyssi (strain GE5 / Orsay).